A 465-amino-acid chain; its full sequence is Serine/threonine-protein kinase 38 (465 aa).

Position 2 is an N-acetylalanine (A2). Residues K62–E87 form an interaction with S100B region. T74 carries the phosphothreonine modification. The 294-residue stretch at F89–F382 folds into the Protein kinase domain. ATP-binding positions include I95–V103 and K118. D212 acts as the Proton acceptor in catalysis. A Phosphoserine modification is found at S264. Phosphoserine; by autocatalysis is present on S281. Residues W306 to I311 carry the UFM1-interacting motif (UFIM) motif. An AGC-kinase C-terminal domain is found at E383 to G455. Position 444 is a phosphothreonine; by STK24/MST3 (T444).

This sequence belongs to the protein kinase superfamily. AGC Ser/Thr protein kinase family. In terms of assembly, homodimeric S100B binds two molecules of STK38. Interacts with MOB1 and MOB2. Interacts with MAP3K1 and MAP3K2 (via the kinase catalytic domain). Forms a tripartite complex with MOBKL1B and STK3/MST2. Interacts with MICAL1; leading to inhibit the protein kinase activity by antagonizing activation by MST1/STK4. It depends on Mg(2+) as a cofactor. ISGylated. In terms of processing, phosphorylated by STK3/MST2 and this is enhanced by MOBKL1B. As to expression, expressed at high levels in spleen, lung, thymus, brain and fat tissue.

The protein localises to the nucleus. It localises to the cytoplasm. The protein resides in the chromosome. It carries out the reaction L-seryl-[protein] + ATP = O-phospho-L-seryl-[protein] + ADP + H(+). It catalyses the reaction L-threonyl-[protein] + ATP = O-phospho-L-threonyl-[protein] + ADP + H(+). Its activity is regulated as follows. Activated by binding of S100B which releases autoinhibitory N-lobe interactions, enabling ATP to bind and the autophosphorylation of Ser-281. Thr-444 then undergoes calcium-dependent phosphorylation by STK24/MST3. Interactions between phosphorylated Thr-444 and the N-lobe promote additional structural changes that complete the activation of the kinase. Autoinhibition is also released by the binding of MOB1/MOBKL1A and MOB2/HCCA2 to the N-terminal of STK38. Functionally, serine/threonine-protein kinase that acts as a negative regulator of MAP3K1/2 signaling. Converts MAP3K2 from its phosphorylated form to its non-phosphorylated form and inhibits autophosphorylation of MAP3K2. Acts as an ufmylation 'reader' in a kinase-independent manner: specifically recognizes and binds mono-ufmylated histone H4 in response to DNA damage, promoting the recruitment of SUV39H1 to the double-strand breaks, resulting in ATM activation. This is Serine/threonine-protein kinase 38 from Mus musculus (Mouse).